Consider the following 339-residue polypeptide: Formyl peptide receptor-related sequence 6 (339 aa).

At 1-23 the chain is on the extracellular side; that stretch reads MEANFSIPQNGSEVVFYDSTTSR. Asn-4 and Asn-10 each carry an N-linked (GlcNAc...) asparagine glycan. Residues 24–44 form a helical membrane-spanning segment; it reads VICIFLVVVLSITFLLGVIGN. Topologically, residues 45 to 62 are cytoplasmic; it reads GLVIYVAGFRMTHTVTTI. Residues 63–85 traverse the membrane as a helical segment; the sequence is CYLNLALSDFSYMASLPFQITSI. Residues 86–99 are Extracellular-facing; that stretch reads VMNGEWLFGWFLCK. Cys-98 and Cys-178 are disulfide-bonded. Residues 100 to 120 traverse the membrane as a helical segment; it reads FVHMIINVNLFLSIFLITFIA. At 121-144 the chain is on the cytoplasmic side; the sequence is MDRCICVLHPVWAQNHRTVNVATK. Residues 145–165 traverse the membrane as a helical segment; it reads VIFGAWILVLMLIFPHCIFVT. The Extracellular portion of the chain corresponds to 166–198; sequence TVKDESGKVHCICNFESWAATPEEQVKVSMTVS. The helical transmembrane segment at 199–219 threads the bilayer; the sequence is LISVTISFIIGFSIPMIFIVI. The Cytoplasmic portion of the chain corresponds to 220-241; sequence CYGLMAAKIGRRGFVNSSRPLR. A helical membrane pass occupies residues 242-262; sequence VLTAVAISFFVCWFPFQLIFL. The Extracellular portion of the chain corresponds to 263–280; it reads LGNIGNKETQNNIDTWVN. The chain crosses the membrane as a helical span at residues 281–301; that stretch reads TASTLASFNSCLNPILYVFLG. Residues 302 to 339 lie on the Cytoplasmic side of the membrane; sequence QQFRERLIYSLSASLERALREDSALNSDKTRNLSSQRL.

The protein belongs to the G-protein coupled receptor 1 family. As to expression, expressed exclusively in vomeronasal tissue. Expressed in 1.2 % of a subset of sensory neurons located in the apical layer of the vomeronasal organ. Each neuron appears to express only one receptor gene. Expressed in brain, spleen, skeletal muscle and at high level in testis.

The protein resides in the membrane. Functionally, may have an olfactory function associated with the identification of pathogens or of pathogenic states. The sequence is that of Formyl peptide receptor-related sequence 6 (Fpr-rs6) from Mus musculus (Mouse).